We begin with the raw amino-acid sequence, 84 residues long: UPF0386 protein Oant_1614 (84 aa).

The protein belongs to the UPF0386 family.

The protein is UPF0386 protein Oant_1614 of Brucella anthropi (strain ATCC 49188 / DSM 6882 / CCUG 24695 / JCM 21032 / LMG 3331 / NBRC 15819 / NCTC 12168 / Alc 37) (Ochrobactrum anthropi).